The primary structure comprises 475 residues: Glutamyl-tRNA(Gln) amidotransferase subunit A (475 aa).

Residues lysine 69 and serine 144 each act as charge relay system in the active site. The active-site Acyl-ester intermediate is serine 168.

It belongs to the amidase family. GatA subfamily. As to quaternary structure, heterotrimer of A, B and C subunits.

It catalyses the reaction L-glutamyl-tRNA(Gln) + L-glutamine + ATP + H2O = L-glutaminyl-tRNA(Gln) + L-glutamate + ADP + phosphate + H(+). Allows the formation of correctly charged Gln-tRNA(Gln) through the transamidation of misacylated Glu-tRNA(Gln) in organisms which lack glutaminyl-tRNA synthetase. The reaction takes place in the presence of glutamine and ATP through an activated gamma-phospho-Glu-tRNA(Gln). This is Glutamyl-tRNA(Gln) amidotransferase subunit A from Methanococcoides burtonii (strain DSM 6242 / NBRC 107633 / OCM 468 / ACE-M).